A 226-amino-acid polypeptide reads, in one-letter code: NADH-quinone oxidoreductase subunit C (226 aa).

The tract at residues 1–21 (MTEPTGDQTPEIIGVRRGMFG) is disordered.

The protein belongs to the complex I 30 kDa subunit family. In terms of assembly, NDH-1 is composed of 14 different subunits. Subunits NuoB, C, D, E, F, and G constitute the peripheral sector of the complex.

The protein resides in the cell membrane. The enzyme catalyses a quinone + NADH + 5 H(+)(in) = a quinol + NAD(+) + 4 H(+)(out). Its function is as follows. NDH-1 shuttles electrons from NADH, via FMN and iron-sulfur (Fe-S) centers, to quinones in the respiratory chain. The immediate electron acceptor for the enzyme in this species is believed to be a menaquinone. Couples the redox reaction to proton translocation (for every two electrons transferred, four hydrogen ions are translocated across the cytoplasmic membrane), and thus conserves the redox energy in a proton gradient. This chain is NADH-quinone oxidoreductase subunit C, found in Mycolicibacterium gilvum (strain PYR-GCK) (Mycobacterium gilvum (strain PYR-GCK)).